The primary structure comprises 445 residues: 6-phosphogluconate dehydrogenase, decarboxylating (445 aa).

Residues 1–4 (AVMG), 22–24 (NRS), 63–65 (VKA), and Asn91 each bind NADP(+). Substrate contacts are provided by residues Asn91 and 117–119 (SGG). The active-site Proton acceptor is the Lys172. 175-176 (HN) is a substrate binding site. Glu179 serves as the catalytic Proton donor. Residues Tyr180, Lys249, Arg276, Arg434, and His440 each coordinate substrate.

It belongs to the 6-phosphogluconate dehydrogenase family. In terms of assembly, homodimer.

It carries out the reaction 6-phospho-D-gluconate + NADP(+) = D-ribulose 5-phosphate + CO2 + NADPH. The protein operates within carbohydrate degradation; pentose phosphate pathway; D-ribulose 5-phosphate from D-glucose 6-phosphate (oxidative stage): step 3/3. Its function is as follows. Catalyzes the oxidative decarboxylation of 6-phosphogluconate to ribulose 5-phosphate and CO(2), with concomitant reduction of NADP to NADPH. The protein is 6-phosphogluconate dehydrogenase, decarboxylating (gnd) of Raoultella terrigena (Klebsiella terrigena).